The primary structure comprises 308 residues: Pseudouridine-5'-phosphate glycosidase (308 aa).

Glutamate 26 serves as the catalytic Proton donor. Substrate is bound by residues lysine 87 and valine 107. Mn(2+) is bound at residue aspartate 139. 141 to 143 (SAD) lines the substrate pocket. The Nucleophile role is filled by lysine 160.

It belongs to the pseudouridine-5'-phosphate glycosidase family. Homotrimer. It depends on Mn(2+) as a cofactor.

It carries out the reaction D-ribose 5-phosphate + uracil = psi-UMP + H2O. Functionally, catalyzes the reversible cleavage of pseudouridine 5'-phosphate (PsiMP) to ribose 5-phosphate and uracil. Functions biologically in the cleavage direction, as part of a pseudouridine degradation pathway. The chain is Pseudouridine-5'-phosphate glycosidase from Legionella pneumophila subsp. pneumophila (strain Philadelphia 1 / ATCC 33152 / DSM 7513).